The sequence spans 443 residues: Thymidine phosphorylase (443 aa).

The protein belongs to the thymidine/pyrimidine-nucleoside phosphorylase family. In terms of assembly, homodimer.

The catalysed reaction is thymidine + phosphate = 2-deoxy-alpha-D-ribose 1-phosphate + thymine. The protein operates within pyrimidine metabolism; dTMP biosynthesis via salvage pathway; dTMP from thymine: step 1/2. Functionally, the enzymes which catalyze the reversible phosphorolysis of pyrimidine nucleosides are involved in the degradation of these compounds and in their utilization as carbon and energy sources, or in the rescue of pyrimidine bases for nucleotide synthesis. The sequence is that of Thymidine phosphorylase from Sodalis glossinidius (strain morsitans).